Here is a 362-residue protein sequence, read N- to C-terminus: Dihydroorotate dehydrogenase (quinone) (362 aa).

Residues 60 to 64 and Thr-84 each bind FMN; that span reads AGFDK. Lys-64 contributes to the substrate binding site. 109-113 contacts substrate; the sequence is NRMGF. Residues Asn-137 and Asn-168 each contribute to the FMN site. Asn-168 contacts substrate. The active-site Nucleophile is the Ser-171. Asn-173 lines the substrate pocket. FMN-binding residues include Lys-213 and Ser-241. 242 to 243 is a substrate binding site; that stretch reads NT. FMN is bound by residues Gly-264, Gly-293, and 314–315; that span reads YS.

Belongs to the dihydroorotate dehydrogenase family. Type 2 subfamily. As to quaternary structure, monomer. The cofactor is FMN.

The protein localises to the cell membrane. The catalysed reaction is (S)-dihydroorotate + a quinone = orotate + a quinol. It functions in the pathway pyrimidine metabolism; UMP biosynthesis via de novo pathway; orotate from (S)-dihydroorotate (quinone route): step 1/1. Functionally, catalyzes the conversion of dihydroorotate to orotate with quinone as electron acceptor. The polypeptide is Dihydroorotate dehydrogenase (quinone) (Bartonella henselae (strain ATCC 49882 / DSM 28221 / CCUG 30454 / Houston 1) (Rochalimaea henselae)).